The primary structure comprises 355 residues: Aromatic amino acid aminotransferase (355 aa).

Lys-217 carries the N6-(pyridoxal phosphate)lysine modification.

This sequence belongs to the class-II pyridoxal-phosphate-dependent aminotransferase family. In terms of assembly, homodimer. Requires pyridoxal 5'-phosphate as cofactor.

The enzyme catalyses an aromatic L-alpha-amino acid + 2-oxoglutarate = an aromatic oxo-acid + L-glutamate. Functionally, aminotransferase that catalyzes the conversion of aromatic amino acids and 2-oxoglutarate into corresponding aromatic oxo acids and L-glutamate. The polypeptide is Aromatic amino acid aminotransferase (Mycolicibacterium paratuberculosis (strain ATCC BAA-968 / K-10) (Mycobacterium paratuberculosis)).